Reading from the N-terminus, the 867-residue chain is Ataxin-7 (867 aa).

A compositionally biased stretch (basic and acidic residues) spans 1 to 15 (MSERAADDVRGEPRR). The segment at 1–59 (MSERAADDVRGEPRRAAGGAAAARQQQQQPQPLQPQRQHPPLRRPRAEDGGTGDTTTSA) is disordered. Low complexity predominate over residues 16-39 (AAGGAAAARQQQQQPQPLQPQRQH). Position 222 is an N6-acetyllysine (lysine 222). A Glycyl lysine isopeptide (Lys-Gly) (interchain with G-Cter in SUMO); alternate cross-link involves residue lysine 243. Lysine 243 is covalently cross-linked (Glycyl lysine isopeptide (Lys-Gly) (interchain with G-Cter in SUMO2); alternate). The 68-residue stretch at 320–387 (KRLSEREFDP…KAREKELIRH (68 aa)) folds into the SCA7 domain. The span at 379 to 400 (AREKELIRHDSQQVPHPLRDPH) shows a compositional bias: basic and acidic residues. Disordered stretches follow at residues 379–483 (AREK…EESV), 600–711 (HGTT…SHSV), and 845–867 (TGNISGAQGLTNNSLLHQPKARP). Pro residues-rich tracts occupy residues 426-437 (PQTPSLPRPPGC) and 447-462 (IDPPPGQESPHPPLPA). Residues 472–481 (EEGEGDDREE) are compositionally biased toward acidic residues. Positions 619 to 647 (SVQSRQVSASSSPPSTPSGLSSVPSSPLS) are enriched in low complexity. Positions 649-659 (KPQKWKPSKSI) are enriched in basic residues. The span at 665 to 674 (SALSTNCHNA) shows a compositional bias: polar residues. A compositionally biased stretch (low complexity) spans 689-711 (SSPLLVPSSSSSSSSSSSSSHSV). Positions 846–860 (GNISGAQGLTNNSLL) are enriched in polar residues.

Belongs to the ataxin-7 family. As to quaternary structure, component of the SAGA transcription coactivator-HAT complex, at least composed of SUPT3H, GCN5L2, TAF5L, TAF6L, SUPT7L, TADA3L, TAD1L, TAF10, TAF12, TRRAP, TAF9 and ATXN7. The STAGA core complex is associated with a subcomplex required for histone deubiquitination composed of ATXN7L3, ENY2 and USP22. Interacts with SORBS1, PSMC1 and CRX. Interacts with TRRAP, GCN5L2 and TAF10. Interacts with alpha tubulin. Proteolytically cleaved by caspase-7 (CASP7). Post-translationally, sumoylation has no effect on subcellular location or interaction with components of the STAGA complex. In terms of tissue distribution, widely expressed in adult tissues, with the highest expression in heart, brain, liver and kidney.

The protein resides in the nucleus. It localises to the nucleolus. It is found in the nucleus matrix. Its subcellular location is the cytoplasm. The protein localises to the cytoskeleton. Functionally, acts as a component of the SAGA (aka STAGA) transcription coactivator-HAT complex. Mediates the interaction of SAGA complex with the CRX and is involved in CRX-dependent gene activation. Probably involved in tethering the deubiquitination module within the SAGA complex. Necessary for microtubule cytoskeleton stabilization. Involved in neurodegeneration. The polypeptide is Ataxin-7 (Atxn7) (Mus musculus (Mouse)).